The primary structure comprises 241 residues: Glucosamine-6-phosphate deaminase (241 aa).

The active-site Proton acceptor; for enolization step is aspartate 67. Asparagine 136 (for ring-opening step) is an active-site residue. The Proton acceptor; for ring-opening step role is filled by histidine 138. The active-site For ring-opening step is the glutamate 143.

The protein belongs to the glucosamine/galactosamine-6-phosphate isomerase family. NagB subfamily.

The enzyme catalyses alpha-D-glucosamine 6-phosphate + H2O = beta-D-fructose 6-phosphate + NH4(+). It participates in amino-sugar metabolism; N-acetylneuraminate degradation; D-fructose 6-phosphate from N-acetylneuraminate: step 5/5. Catalyzes the reversible isomerization-deamination of glucosamine 6-phosphate (GlcN6P) to form fructose 6-phosphate (Fru6P) and ammonium ion. This chain is Glucosamine-6-phosphate deaminase, found in Alkaliphilus oremlandii (strain OhILAs) (Clostridium oremlandii (strain OhILAs)).